The primary structure comprises 374 residues: 4-galactosyl-N-acetylglucosaminide 3-alpha-L-fucosyltransferase FUT5 (374 aa).

The Cytoplasmic portion of the chain corresponds to 1 to 15 (MDPLGPAKPQWLWRR). Residues 16–34 (CLAGLLFQLLVAVCFFSYL) form a helical; Signal-anchor for type II membrane protein membrane-spanning segment. At 35–374 (RVSRDDATGS…TVRSIAAWFT (340 aa)) the chain is on the lumenal side. N-linked (GlcNAc...) asparagine glycosylation is found at Asn60, Asn105, Asn167, and Asn198.

Belongs to the glycosyltransferase 10 family. Liver, colon and testis and trace amounts in T-cells and brain.

It is found in the golgi apparatus. The protein localises to the golgi stack membrane. It catalyses the reaction a beta-D-galactosyl-(1-&gt;3)-N-acetyl-beta-D-glucosaminyl derivative + GDP-beta-L-fucose = a beta-D-galactosyl-(1-&gt;3)-[alpha-L-fucosyl-(1-&gt;4)]-N-acetyl-beta-D-glucosaminyl derivative + GDP + H(+). The enzyme catalyses an N-acetyl-alpha-neuraminyl-(2-&gt;3)-beta-D-galactosyl-(1-&gt;4)-N-acetyl-beta-D-glucosaminyl derivative + GDP-beta-L-fucose = an alpha-Neu5Ac-(2-&gt;3)-beta-D-Gal-(1-&gt;4)-[alpha-L-Fuc-(1-&gt;3)]-beta-D-GlcNAc derivative + GDP + H(+). It carries out the reaction an alpha-Neu5Ac-(2-&gt;3)-beta-D-Gal-(1-&gt;4)-beta-D-GlcNAc-(1-&gt;3)-beta-D-Gal-(1-&gt;4)-[alpha-L-Fuc-(1-&gt;3)]-beta-D-GlcNAc derivative + GDP-beta-L-fucose = an alpha-Neu5Ac-(2-&gt;3)-beta-D-Gal-(1-&gt;4)-[alpha-L-Fuc-(1-&gt;3)]-beta-D-GlcNAc-(1-&gt;3)-beta-D-Gal-(1-&gt;4)-[alpha-L-Fuc-(1-&gt;3)]-beta-D-GlcNAc derivative + GDP + H(+). The catalysed reaction is a beta-D-galactosyl-(1-&gt;4)-N-acetyl-beta-D-glucosaminyl derivative + GDP-beta-L-fucose = a beta-D-galactosyl-(1-&gt;4)-[alpha-L-fucosyl-(1-&gt;3)]-N-acetyl-beta-D-glucosaminyl derivative + GDP + H(+). It catalyses the reaction a neolactoside nLc4Cer + GDP-beta-L-fucose = a neolactoside III(3)-alpha-Fuc-nLc4Cer + GDP + H(+). The enzyme catalyses a neolactoside nLc6Cer + GDP-beta-L-fucose = beta-D-galactosyl-(1-&gt;4)-N-acetyl-beta-D-glucosaminyl-(1-&gt;3)-beta-D-galactosyl-(1-&gt;4)-[alpha-L-fucosyl-(1-&gt;3)]-N-acetyl-beta-D-glucosaminyl-(1-&gt;3)-beta-D-galactosyl-(1-&gt;4)-beta-D-glucosyl-(1&lt;-&gt;1')-ceramide + GDP + H(+). It carries out the reaction a neolactoside nLc6Cer(d18:1(4E)) + GDP-beta-L-fucose = a neolactoside III(3)-alpha-Fuc-nLc6Cer(d18:1(4E)) + GDP + H(+). The catalysed reaction is a neolactoside nLc4Cer(d18:1(4E)) + GDP-beta-L-fucose = a neolactoside III(3)-alpha-Fuc-nLc4Cer(d18:1(4E)) + GDP + H(+). It catalyses the reaction a neolactoside VI(3)-alpha-NeuNAc-nLc6Cer + GDP-beta-L-fucose = a neolactoside VI(3)-alpha-NeuAc,III(3)-alphaFuc-nLc6Cer + GDP + H(+). The enzyme catalyses beta-D-galactosyl-(1-&gt;4)-N-acetyl-D-glucosamine + GDP-beta-L-fucose = beta-D-galactosyl-(1-&gt;4)-[alpha-L-fucosyl-(1-&gt;3)]-N-acetyl-D-glucosamine + GDP + H(+). It carries out the reaction N-acetyl-alpha-neuraminosyl-(2-&gt;3)-beta-D-galactosyl-(1-&gt;4)-N-acetyl-beta-D-glucosamine + GDP-beta-L-fucose = N-acetyl-alpha-neuraminosyl-(2-&gt;3)-beta-D-galactosyl-(1-&gt;4)-[alpha-L-fucosyl-(1-&gt;3)]-N-acetyl-beta-D-glucosamine + GDP + H(+). The catalysed reaction is alpha-L-Fuc-(1-&gt;2)-beta-D-Gal-(1-&gt;4)-D-GlcNAc + GDP-beta-L-fucose = alpha-L-Fuc-(1-&gt;2)-beta-D-Gal-(1-&gt;4)-[alpha-L-Fuc-(1-&gt;3)]-D-GlcNAc + GDP + H(+). It catalyses the reaction an alpha-Neu5Ac-(2-&gt;3)-beta-D-Gal-(1-&gt;3)-D-GlcNAc derivative + GDP-beta-L-fucose = an alpha-Neu5Ac-(2-&gt;3)-beta-D-Gal-(1-&gt;3)-[alpha-L-Fuc-(1-&gt;4)]-beta-D-GlcNAc derivative + GDP + H(+). The protein operates within protein modification; protein glycosylation. Its function is as follows. Catalyzes preferentially the transfer of L-fucose, from a guanosine diphosphate-beta-L-fucose, to the N-acetyl-beta-D-glucosamine (GlcNAc) of an N-acetyllactosamine unit (type 2 chain) of an oligosaccharide, or a glycoprotein- and a glycolipid-linked N-acetyllactosamine unit via an alpha (1,3) linkage and participates in the surface expression of VIM-2, Lewis X/SSEA-1 and sialyl Lewis X antigens. Preferentially transfers fucose to the GlcNAc of an internal N-acetyllactosamine unit of a poly-N-acetyllactosamine chain acceptor substrate. Also catalyzes to a lesser extend the transfer of L-fucose to the GlcNAc of a type 1 (beta-D-galactosyl-(1-&gt;3)-N-acetyl-beta-D-glucosaminyl) or H-type 1 (alpha-L-Fuc-(1-&gt;2)-beta-D-Gal-(1-&gt;3)-D-GlcNAc) chain oligosaccharide via an alpha (1,4) linkage. Preferentially catalyzes sialylated type 2 oligosaccharide acceptors over neutral type 2 or H type 2 (alpha-L-Fuc-(1-&gt;2)-beta-D-Gal-(1-&gt;4)-D-GlcNAc) oligosaccharide acceptors. Lactose-based structures are also acceptor substrates. The polypeptide is 4-galactosyl-N-acetylglucosaminide 3-alpha-L-fucosyltransferase FUT5 (Homo sapiens (Human)).